Here is a 289-residue protein sequence, read N- to C-terminus: ATP phosphoribosyltransferase (289 aa).

It belongs to the ATP phosphoribosyltransferase family. Long subfamily. The cofactor is Mg(2+).

Its subcellular location is the cytoplasm. The enzyme catalyses 1-(5-phospho-beta-D-ribosyl)-ATP + diphosphate = 5-phospho-alpha-D-ribose 1-diphosphate + ATP. It participates in amino-acid biosynthesis; L-histidine biosynthesis; L-histidine from 5-phospho-alpha-D-ribose 1-diphosphate: step 1/9. Feedback inhibited by histidine. Catalyzes the condensation of ATP and 5-phosphoribose 1-diphosphate to form N'-(5'-phosphoribosyl)-ATP (PR-ATP). Has a crucial role in the pathway because the rate of histidine biosynthesis seems to be controlled primarily by regulation of HisG enzymatic activity. The sequence is that of ATP phosphoribosyltransferase from Methanosarcina barkeri (strain Fusaro / DSM 804).